Here is an 846-residue protein sequence, read N- to C-terminus: FNIP repeat-containing protein DDB_G0289381 (846 aa).

Over residues 1 to 11 the composition is skewed to basic residues; sequence MKLLSFKKKPS. Positions 1-39 are disordered; that stretch reads MKLLSFKKKPSLTKSQSCPDKLKNLKEQQKDPKNGANYD. Basic and acidic residues predominate over residues 20 to 33; that stretch reads DKLKNLKEQQKDPK. FNIP repeat units follow at residues 159-193, 194-239, 240-283, and 284-325; these read IPNH…FGEK, FNQV…FGNN, FDQI…FQEN, and FNQP…YGGD. Positions 362–384 are disordered; sequence SSISLDISGGGSGSGSGVNSTTT. FNIP repeat units lie at residues 458 to 500, 501 to 546, and 654 to 693; these read FQQL…FGDG, FNQQ…FGKS, and FNQS…MFNK. A disordered region spans residues 702-734; it reads SNNNNENNNENNNENNNENNNENNNENNNNTNS. The stretch at 702-734 forms a coiled coil; the sequence is SNNNNENNNENNNENNNENNNENNNENNNNTNS.

This is FNIP repeat-containing protein DDB_G0289381 from Dictyostelium discoideum (Social amoeba).